The chain runs to 1468 residues: Centrosomal protein of 290 kDa (1468 aa).

Coiled-coil stretches lie at residues 1-25 (ERQL…VGEK), 52-121 (SLSE…IEQA), 172-292 (KMYE…DEKA), 318-528 (VASK…EAQK), 559-592 (RIIL…ILSR), 627-688 (HTLK…QADN), and 736-1441 (IKLK…SEQF). Positions 1060 to 1468 (TTGLTVDQVM…QENPVNFPIY (409 aa)) are self-association (with itself or N-terminus). The segment at 1130-1152 (LSKDAYSRPSTSGIDSDDHYQRE) is disordered.

As to quaternary structure, part of the tectonic-like complex (also named B9 complex). Interacts with ATF4 via its N-terminal region. Associates with the BBSome complex, interacting (via N-terminus) with BBS4. Interacts with IQCB1/NPHP5; IQCB1 and CEP290/NPHP6 are proposed to form a functional NPHP5-6 module localized to the centrosome. Interacts with NPHP4; the interaction likely requires additional interactors. Interacts with ZNF423, FAM161A, CEP162, CEP162, CEP131, TALPID3, CCDC13, CC2D2A, RPGRIP1. Can self-associate (homo- or heteromeric). Interacts with CCP110; required for suppressing cilia formation. Interacts with RPGR. Associates (via C-terminus) with microtubules; association to microtubule is reduced in response to cellular stress, such as ultraviolet light (UV) radiation or heat shock, in a process that requires p38 MAP kinase signaling. Interacts with FAM161A. Interacts with PCM1. Interacts with CCDC66. Interacts with ARMC9 and CSPP1. Post-translationally, ubiquitinated. May undergo monoubiquitination; monoubiquitination is inhibited in response to cellular stress, such as ultraviolet light (UV) radiation or heat shock, but does not cause its displacement from centriolar satellites.

It localises to the cytoplasm. Its subcellular location is the cytoskeleton. It is found in the microtubule organizing center. The protein localises to the centrosome. The protein resides in the centriolar satellite. It localises to the nucleus. Its subcellular location is the cell projection. It is found in the cilium. The protein localises to the cilium basal body. The protein resides in the centriole. It localises to the cytoplasmic vesicle. Its function is as follows. Involved in early and late steps in cilia formation. Its association with CCP110 is required for inhibition of primary cilia formation by CCP110. May play a role in early ciliogenesis in the disappearance of centriolar satellites and in the transition of primary ciliar vesicles (PCVs) to capped ciliary vesicles (CCVs). Required for the centrosomal recruitment of RAB8A and for the targeting of centriole satellite proteins to centrosomes such as of PCM1. Required for the correct localization of ciliary and phototransduction proteins in retinal photoreceptor cells; may play a role in ciliary transport processes. Required for efficient recruitment of RAB8A to primary cilium. In the ciliary transition zone is part of the tectonic-like complex which is required for tissue-specific ciliogenesis and may regulate ciliary membrane composition. Involved in regulation of the BBSome complex integrity, specifically for presence of BBS2, BBS5 and BBS8/TTC8 in the complex, and in ciliary targeting of selected BBSome cargos. May play a role in controlling entry of the BBSome complex to cilia possibly implicating IQCB1/NPHP5. Activates ATF4-mediated transcription. This chain is Centrosomal protein of 290 kDa (CEP290), found in Bos taurus (Bovine).